We begin with the raw amino-acid sequence, 191 residues long: MYTARKKIQKDKGVEPSEFEDTVAQAFFDLENGNQELKSDLKDLYINTAIQMDVVGNRKAVVIHVPYRLRKPFRKIHVRLVRELERVSGKDVVFVATRRIVRPPKKGSAVQRPRTRTLTAVHDGILEDVVYPAEIVGKRVRYRLDGAKVIKIYLDPKERNNTEYKLETFSAVYRRLCGKDVVFEYPVAETA.

The protein belongs to the eukaryotic ribosomal protein eS7 family.

The protein is Small ribosomal subunit protein eS7 (RPS7) of Hordeum vulgare (Barley).